The primary structure comprises 870 residues: Large structural phosphoprotein (870 aa).

A compositionally biased stretch (basic and acidic residues) spans 612–649 (NDRDVLRGGKGNSKDLHSGGNAKKKEMSGKFNDDKEMT). Disordered stretches follow at residues 612 to 662 (NDRD…LMGD) and 840 to 870 (QDGE…AIAS).

Belongs to the herpesviridae large structural phosphoprotein family. Post-translationally, phosphorylated at multiple sites.

The protein localises to the virion tegument. The chain is Large structural phosphoprotein (U11) from Human herpesvirus 6A (strain Uganda-1102) (HHV-6 variant A).